The primary structure comprises 534 residues: Apolipoprotein N-acyltransferase (534 aa).

A run of 7 helical transmembrane segments spans residues 8–28 (VILVWGFKRSLLAIGAGAFAV), 31–51 (LPPFGFFAAMFLSFTLLVWLI), 69–89 (AFAVGWLFGFGYFVAGLWWLG), 105–125 (LAILGLPACLAIFYGLAVALA), 127–147 (IFWSDGMGRIAALAAGFGLME), 178–198 (VIGAMGVTALAVFVFSAPALF), and 208–228 (VALAVLLFAAHLGYGAYALYL). The CN hydrolase domain occupies 246-496 (VQPDIDQAAK…TGFIDATVDS (251 aa)). The active-site Proton acceptor is the glutamate 291. Lysine 355 is an active-site residue. The active-site Nucleophile is cysteine 408. A helical membrane pass occupies residues 511-531 (FWLTEALLILIALISREGFIF).

Belongs to the CN hydrolase family. Apolipoprotein N-acyltransferase subfamily.

It is found in the cell inner membrane. The enzyme catalyses N-terminal S-1,2-diacyl-sn-glyceryl-L-cysteinyl-[lipoprotein] + a glycerophospholipid = N-acyl-S-1,2-diacyl-sn-glyceryl-L-cysteinyl-[lipoprotein] + a 2-acyl-sn-glycero-3-phospholipid + H(+). Its pathway is protein modification; lipoprotein biosynthesis (N-acyl transfer). Its function is as follows. Catalyzes the phospholipid dependent N-acylation of the N-terminal cysteine of apolipoprotein, the last step in lipoprotein maturation. The sequence is that of Apolipoprotein N-acyltransferase from Rhizobium etli (strain CIAT 652).